The following is a 642-amino-acid chain: Palmitoyltransferase akr1 (642 aa).

ANK repeat units lie at residues 1–29 (MGSL…DVNA), 33–62 (GGAT…DVNA), 67–96 (LQAA…DPLL), 100–129 (QGFN…SVDL), 133–162 (QQHT…DVLA), and 166–196 (DKMT…PCTA). Over 1–256 (MGSLFLAASQ…SKFQFSQKTF (256 aa)) the chain is Cytoplasmic. Helical transmembrane passes span 257–277 (IIFC…IMSI) and 278–298 (CPMV…FKYI). Topologically, residues 299-316 (TTCIHANIDIVHFYLETP) are cytoplasmic. Residues 317-337 (FLAGIFSSIFFWVWCHSLLYI) form a helical membrane-spanning segment. Residues 338 to 343 (VPKTLP) are Lumenal-facing. Residues 344–364 (IKPLSSLLFVLISFTCIGLYV) form a helical membrane-spanning segment. Residues 365-444 (RTAFQNPGYV…NCVGARNHRT (80 aa)) are Cytoplasmic-facing. In terms of domain architecture, DHHC spans 400 to 450 (HYCLKCFQVKPPRSYHCGACKRCINRYDHHCPWTGNCVGARNHRTFLLFVF). The active-site S-palmitoyl cysteine intermediate is cysteine 430. The chain crosses the membrane as a helical span at residues 445-465 (FLLFVFTLSTLIPIYFYVAFY). The Lumenal portion of the chain corresponds to 466-496 (YLQNIPIQKKYESYRCLFISGTICQWSLKDM). The chain crosses the membrane as a helical span at residues 497–517 (FVLVASLTLFVNWCWVVVLAF). The Cytoplasmic segment spans residues 518 to 642 (TQICQVAHNV…GRQDEATRHV (125 aa)).

Belongs to the DHHC palmitoyltransferase family. AKR/ZDHHC17 subfamily.

It is found in the early endosome membrane. The protein localises to the golgi apparatus membrane. The catalysed reaction is L-cysteinyl-[protein] + hexadecanoyl-CoA = S-hexadecanoyl-L-cysteinyl-[protein] + CoA. Functionally, palmitoyltransferase specific for casein kinase 1. This chain is Palmitoyltransferase akr1 (akr1), found in Schizosaccharomyces pombe (strain 972 / ATCC 24843) (Fission yeast).